Consider the following 366-residue polypeptide: Ribonuclease P protein subunit drpp30 (366 aa).

The disordered stretch occupies residues 265-366 (EDTQPTNNNI…DIDNNKRKRE (102 aa)). Over residues 275–290 (PHEKHINKESTGKETI) the composition is skewed to basic and acidic residues. Low complexity-rich tracts occupy residues 291 to 324 (PKPT…TPSI) and 333 to 351 (TAKS…AQKQ). Over residues 352–366 (GKMDIDIDNNKRKRE) the composition is skewed to basic and acidic residues.

Belongs to the eukaryotic/archaeal RNase P protein component 3 family.

Its subcellular location is the nucleus. The enzyme catalyses Endonucleolytic cleavage of RNA, removing 5'-extranucleotides from tRNA precursor.. In terms of biological role, component of ribonuclease P, a protein complex that generates mature tRNA molecules by cleaving their 5'-ends. This is Ribonuclease P protein subunit drpp30 (drpp30) from Dictyostelium discoideum (Social amoeba).